We begin with the raw amino-acid sequence, 941 residues long: DNA mismatch repair protein MutS (941 aa).

613 to 620 (GPNMAGKS) contributes to the ATP binding site.

Belongs to the DNA mismatch repair MutS family.

Functionally, this protein is involved in the repair of mismatches in DNA. It is possible that it carries out the mismatch recognition step. This protein has a weak ATPase activity. This chain is DNA mismatch repair protein MutS, found in Clostridium botulinum (strain Alaska E43 / Type E3).